A 130-amino-acid polypeptide reads, in one-letter code: Small ribosomal subunit protein uS11c (130 aa).

This sequence belongs to the universal ribosomal protein uS11 family. Part of the 30S ribosomal subunit.

It localises to the plastid. Its subcellular location is the chloroplast. This Chlorokybus atmophyticus (Soil alga) protein is Small ribosomal subunit protein uS11c.